The chain runs to 315 residues: Putative methyltransferase NSUN5C (315 aa).

Residues 50-56 (VPPQAIK), Asp74, Arg79, and Asp121 each bind S-adenosyl-L-methionine. Residue Cys175 is the Nucleophile of the active site. The disordered stretch occupies residues 245-269 (TSASQAKASAPERTPSPAPKRKKRA).

It belongs to the class I-like SAM-binding methyltransferase superfamily. RsmB/NOP family. Ubiquitous.

May have S-adenosyl-L-methionine-dependent methyl-transferase activity. In Homo sapiens (Human), this protein is Putative methyltransferase NSUN5C (NSUN5P2).